A 487-amino-acid chain; its full sequence is E3 ubiquitin-protein ligase RNF8 (487 aa).

The 55-residue stretch at Val-38–Leu-92 folds into the FHA domain. Positions Gln-68–Gly-72 are required for interaction with PIWIL1. Disordered regions lie at residues Met-143–Ile-176 and Glu-182–Glu-201. Ser-157 carries the phosphoserine modification. The RING-type zinc finger occupies Cys-405–Arg-443.

Belongs to the RNF8 family. Homodimer. Forms a E2-E3 ubiquitin ligase complex composed of the RNF8 homodimer and a E2 heterodimer of UBE2N and UBE2V2. Interacts with class III E2s, including UBE2E1, UBE2E2, and UBE2E3 and with UBE2N. Interacts with RXRA. Interacts (via FHA domain) with phosphorylated HERC2 (via C-terminus). Interacts with PIWIL1; leading to sequester RNF8 in the cytoplasm. Interacts with WRAP53/TCAB1. In terms of processing, autoubiquitinated through 'Lys-48' and 'Lys-63' of ubiquitin. 'Lys-63' polyubiquitination is mediated by UBE2N. 'Lys-29'-type polyubiquitination is also observed, but it doesn't require its own functional RING-type zinc finger.

It is found in the nucleus. Its subcellular location is the cytoplasm. The protein resides in the midbody. The protein localises to the chromosome. It localises to the telomere. The enzyme catalyses S-ubiquitinyl-[E2 ubiquitin-conjugating enzyme]-L-cysteine + [acceptor protein]-L-lysine = [E2 ubiquitin-conjugating enzyme]-L-cysteine + N(6)-ubiquitinyl-[acceptor protein]-L-lysine.. It functions in the pathway protein modification; protein ubiquitination. Functionally, E3 ubiquitin-protein ligase that plays a key role in DNA damage signaling via 2 distinct roles: by mediating the 'Lys-63'-linked ubiquitination of histones H2A and H2AX and promoting the recruitment of DNA repair proteins at double-strand breaks (DSBs) sites, and by catalyzing 'Lys-48'-linked ubiquitination to remove target proteins from DNA damage sites. Following DNA DSBs, it is recruited to the sites of damage by ATM-phosphorylated MDC1 and catalyzes the 'Lys-63'-linked ubiquitination of histones H2A and H2AX, thereby promoting the formation of TP53BP1 and BRCA1 ionizing radiation-induced foci (IRIF). Also controls the recruitment of UIMC1-BRCC3 (RAP80-BRCC36) and PAXIP1/PTIP to DNA damage sites. Promotes the recruitment of NBN to DNA damage sites by catalyzing 'Lys-6'-linked ubiquitination of NBN. Also recruited at DNA interstrand cross-links (ICLs) sites and catalyzes 'Lys-63'-linked ubiquitination of histones H2A and H2AX, leading to recruitment of FAAP20 and Fanconi anemia (FA) complex, followed by interstrand cross-link repair. H2A ubiquitination also mediates the ATM-dependent transcriptional silencing at regions flanking DSBs in cis, a mechanism to avoid collision between transcription and repair intermediates. Promotes the formation of 'Lys-63'-linked polyubiquitin chains via interactions with the specific ubiquitin-conjugating UBE2N/UBC13 and ubiquitinates non-histone substrates such as PCNA. Substrates that are polyubiquitinated at 'Lys-63' are usually not targeted for degradation. Also catalyzes the formation of 'Lys-48'-linked polyubiquitin chains via interaction with the ubiquitin-conjugating UBE2L6/UBCH8, leading to degradation of substrate proteins such as CHEK2, JMJD2A/KDM4A and KU80/XRCC5: it is still unclear how the preference toward 'Lys-48'- versus 'Lys-63'-linked ubiquitination is regulated but it could be due to RNF8 ability to interact with specific E2 specific ligases. For instance, interaction with phosphorylated HERC2 promotes the association between RNF8 and UBE2N/UBC13 and favors the specific formation of 'Lys-63'-linked ubiquitin chains. Promotes non-homologous end joining (NHEJ) by promoting the 'Lys-48'-linked ubiquitination and degradation the of KU80/XRCC5. Following DNA damage, mediates the ubiquitination and degradation of JMJD2A/KDM4A in collaboration with RNF168, leading to unmask H4K20me2 mark and promote the recruitment of TP53BP1 at DNA damage sites. Following DNA damage, mediates the ubiquitination and degradation of POLD4/p12, a subunit of DNA polymerase delta. In the absence of POLD4, DNA polymerase delta complex exhibits higher proofreading activity. In addition to its function in damage signaling, also plays a role in higher-order chromatin structure by mediating extensive chromatin decondensation. Involved in the activation of ATM by promoting histone H2B ubiquitination, which indirectly triggers histone H4 'Lys-16' acetylation (H4K16ac), establishing a chromatin environment that promotes efficient activation of ATM kinase. Required in the testis, where it plays a role in the replacement of histones during spermatogenesis. At uncapped telomeres, promotes the joining of deprotected chromosome ends by inducing H2A ubiquitination and TP53BP1 recruitment, suggesting that it may enhance cancer development by aggravating telomere-induced genome instability in case of telomeric crisis. Promotes the assembly of RAD51 at DNA DSBs in the absence of BRCA1 and TP53BP1 Also involved in class switch recombination in immune system, via its role in regulation of DSBs repair. May be required for proper exit from mitosis after spindle checkpoint activation and may regulate cytokinesis. May play a role in the regulation of RXRA-mediated transcriptional activity. Not involved in RXRA ubiquitination by UBE2E2. The sequence is that of E3 ubiquitin-protein ligase RNF8 from Bos taurus (Bovine).